The chain runs to 59 residues: Early growth response protein 1 (59 aa).

C2H2-type zinc fingers lie at residues 1–18, 24–46, and 52–59; these read CDRR…IRIH, FQCR…IRTH, and FACDICGR.

This sequence belongs to the EGR C2H2-type zinc-finger protein family.

The protein resides in the nucleus. The protein localises to the cytoplasm. Functionally, transcriptional regulator. Recognizes and binds to the DNA sequence 5'-GCG(T/G)GGGCG-3'(EGR-site) in the promoter region of target genes. Binds double-stranded target DNA, irrespective of the cytosine methylation status. Regulates the transcription of numerous target genes, and thereby plays an important role in regulating the response to growth factors, DNA damage, and ischemia. Plays a role in the regulation of cell survival, proliferation and cell death. Mediates responses to ischemia and hypoxia; regulates the expression of proteins that are involved in inflammatory processes. Plays a role in regulating the expression of circadian clock genes. The sequence is that of Early growth response protein 1 (EGR1) from Serinus canaria (Island canary).